The following is a 188-amino-acid chain: Dual specificity protein phosphatase 18 (188 aa).

The Tyrosine-protein phosphatase domain occupies 19 to 160 (GLSQITSSLY…LIHYEFQLFG (142 aa)). The tract at residues 95 to 141 (MKQGRTLLHCAAGVSRSAALCLAYLMKYHAMSLLDAHTWTKSCRPII) is sufficient for mitochondrial localization. Cys104 (phosphocysteine intermediate) is an active-site residue.

This sequence belongs to the protein-tyrosine phosphatase family. Non-receptor class dual specificity subfamily.

It localises to the cytoplasm. Its subcellular location is the nucleus. It is found in the mitochondrion inner membrane. It catalyses the reaction O-phospho-L-tyrosyl-[protein] + H2O = L-tyrosyl-[protein] + phosphate. The enzyme catalyses O-phospho-L-seryl-[protein] + H2O = L-seryl-[protein] + phosphate. The catalysed reaction is O-phospho-L-threonyl-[protein] + H2O = L-threonyl-[protein] + phosphate. Its function is as follows. Can dephosphorylate single and diphosphorylated synthetic MAPK peptides, with preference for the phosphotyrosine and diphosphorylated forms over phosphothreonine. In vitro, dephosphorylates p-nitrophenyl phosphate (pNPP). In Bos taurus (Bovine), this protein is Dual specificity protein phosphatase 18 (DUSP18).